We begin with the raw amino-acid sequence, 447 residues long: Argininosuccinate synthase (447 aa).

ATP contacts are provided by residues 20 to 28 (AFSGGLDTS) and A46. Position 102 (Y102) interacts with L-citrulline. Positions 132 and 134 each coordinate ATP. L-aspartate contacts are provided by T134, N138, and D139. N138 contacts L-citrulline. An ATP-binding site is contributed by D139. Positions 142 and 195 each coordinate L-citrulline. D197 is an ATP binding site. L-citrulline is bound by residues T204, E206, and E283.

Belongs to the argininosuccinate synthase family. Type 2 subfamily. As to quaternary structure, homotetramer.

It localises to the cytoplasm. The enzyme catalyses L-citrulline + L-aspartate + ATP = 2-(N(omega)-L-arginino)succinate + AMP + diphosphate + H(+). The protein operates within amino-acid biosynthesis; L-arginine biosynthesis; L-arginine from L-ornithine and carbamoyl phosphate: step 2/3. The sequence is that of Argininosuccinate synthase from Neisseria meningitidis serogroup C / serotype 2a (strain ATCC 700532 / DSM 15464 / FAM18).